Reading from the N-terminus, the 344-residue chain is Fructose-1,6-bisphosphatase class 1 (344 aa).

Glu91, Asp110, Leu112, and Asp113 together coordinate Mg(2+). Substrate-binding positions include 113–116 (DGSS) and Asn200. Glu272 is a binding site for Mg(2+).

Belongs to the FBPase class 1 family. As to quaternary structure, homotetramer. The cofactor is Mg(2+).

The protein localises to the cytoplasm. The enzyme catalyses beta-D-fructose 1,6-bisphosphate + H2O = beta-D-fructose 6-phosphate + phosphate. The protein operates within carbohydrate biosynthesis; Calvin cycle. The polypeptide is Fructose-1,6-bisphosphatase class 1 (Rhodopseudomonas palustris (strain BisB18)).